A 68-amino-acid chain; its full sequence is Large ribosomal subunit protein uL30 (68 aa).

Belongs to the universal ribosomal protein uL30 family. In terms of assembly, part of the 50S ribosomal subunit.

The protein is Large ribosomal subunit protein uL30 of Agrobacterium fabrum (strain C58 / ATCC 33970) (Agrobacterium tumefaciens (strain C58)).